We begin with the raw amino-acid sequence, 165 residues long: uncharacterized protein (165 aa).

The chain crosses the membrane as a helical span at residues 20–40; the sequence is INLIASIVLWLLFVITVIGTF. N51 carries an N-linked (GlcNAc...) asparagine; by host glycan. Residues 97 to 117 form a helical membrane-spanning segment; it reads VGIIVILIFMLMIIMNGFYQM.

The protein resides in the membrane. This is an uncharacterized protein from Acanthamoeba polyphaga (Amoeba).